We begin with the raw amino-acid sequence, 665 residues long: MSLAADNVLLVEEGRPATAEHPSAGPVYRCKYAKDGLLDLPTDIDSPWQFFSEAVKKYPNEQMLGQRVTTDSKVGPYTWITYKEAHDAAIRIGSAIRSRGVDPGHCCGIYGANCPEWIIAMEACMSQGITYVPLYDSLGVNAVEFIINHAEVSLVFVQEKTVSSILSCQKGCSSNLKTIVSFGEVSSTQKEEAKNQCVSLFSWNEFSLMGNLDEANLPRKRKTDICTIMYTSGTTGEPKGVILNNAAISVQVLSIDKMLEVTDRSCDTSDVFFSYLPLAHCYDQVMEIYFLSRGSSVGYWRGDIRYLMDDVQALKPTVFCGVPRVYDKLYAGIMQKISASGLIRKKLFDFAYNYKLGNMRKGFSQEEASPRLDRLMFDKIKEALGGRAHMLLSGAAPLPRHVEEFLRIIPASNLSQGYGLTESCGGSFTTLAGVFSMVGTVGVPMPTVEARLVSVPEMGYDAFSADVPRGEICLRGNSMFSGYHKRQDLTDQVLIDGWFHTGDIGEWQEDGSMKIIDRKKNIFKLSQGEYVAVENLENTYSRCPLIAQIWVYGNSFESFLVGVVVPDRKAIEDWAKLNYQSPNDFESLCQNLKAQKYFLDELNSTAKQYQLKGFEMLKAIHLEPNPFDIERDLITPTFKLKRPQLLQHYKGIVDQLYSEAKRSMA.

ATP is bound at residue 228 to 239; sequence IMYTSGTTGEPK. A fatty acid-binding region spans residues 496–520; sequence DGWFHTGDIGEWQEDGSMKIIDRKK.

Belongs to the ATP-dependent AMP-binding enzyme family. It depends on Mg(2+) as a cofactor. In terms of tissue distribution, expressed along the entire length of the stem, but expression was not entirely epidermal specific, with some expression found in internal cell layers as well. Was expressed in leave epidermal cells, flowers (sepals, petals, stamens, filaments and carpel), siliques and developing seeds. In roots, expression was detected in an internal cell layer, probably the endodermal layer.

The protein resides in the endoplasmic reticulum. The catalysed reaction is a long-chain fatty acid + ATP + CoA = a long-chain fatty acyl-CoA + AMP + diphosphate. The protein operates within lipid metabolism; fatty acid metabolism. In terms of biological role, activation of long-chain fatty acids for both synthesis of cellular lipids, and degradation via beta-oxidation. Acts in the cutin pathway. Preferentially uses palmitate, palmitoleate, oleate and linoleate. Required for repression of lateral root formation through its role in cutin biosynthesis and subsequent aerial tissues permeability. In Arabidopsis thaliana (Mouse-ear cress), this protein is Long chain acyl-CoA synthetase 2 (LACS2).